The sequence spans 383 residues: MDIAKKFISEIDDKLESKSEFDKELEKIKSSFNEEYEKWSSGKQRGSSSKHGNQSTHGDSSPTRNSSGSSKKGRPKANRVETSSELPDHLIRGFINEKLFLKNFLLKQKESEEFKTLAIVGKYGVGKTTLCQAVFNDEDVKQVYFPRIWVSMYSKETKEDEDPKIDVVKRILRSLGVEDEMFKHIKTEAEEEKSIKDEAGEREEETVKEKELARLLYALHLNLIGKKYLIVLDDVWEDNEWDQRLDDEKKQQEKSHLSCGFPKGFGGKVIMTSRDERLAKAIVGEEENLQRLFPRSDAESLWEIYIDAVPTKVDDAAATNLGDAVATNAGDAVAPKVNPRYPGRYKQELMDKSCGIPLAARMLAKIEPVKVDEIGNIDRKQSF.

The tract at residues 36-84 (YEKWSSGKQRGSSSKHGNQSTHGDSSPTRNSSGSSKKGRPKANRVETSS) is disordered. Polar residues predominate over residues 41–70 (SGKQRGSSSKHGNQSTHGDSSPTRNSSGSS). 2 NB-ARC domains span residues 75 to 184 (PKAN…MFKH) and 207 to 281 (VKEK…LAKA). Residue 121-128 (GKYGVGKT) participates in ATP binding.

Its function is as follows. Possible disease resistance protein. The polypeptide is Probable disease resistance protein At4g19060 (Arabidopsis thaliana (Mouse-ear cress)).